The primary structure comprises 151 residues: Putative calcium-binding protein CML23 (151 aa).

EF-hand domains are found at residues 2–37 (VASD…SLGE), 39–74 (MPDE…MEAD), 84–119 (ETCR…LGTH), and 120–151 (LDVA…MMMA). The Ca(2+) site is built by Asp15, Asp17, Asp19, Lys21, Glu26, Asp52, Asp54, Asp56, and Glu63. Asp133, Asn135, Asp137, and Glu144 together coordinate Ca(2+).

Potential calcium sensor. The sequence is that of Putative calcium-binding protein CML23 (CML23) from Oryza sativa subsp. japonica (Rice).